The primary structure comprises 401 residues: Lipid-A-disaccharide synthase (401 aa).

The protein belongs to the LpxB family.

It carries out the reaction a lipid X + a UDP-2-N,3-O-bis[(3R)-3-hydroxyacyl]-alpha-D-glucosamine = a lipid A disaccharide + UDP + H(+). It participates in bacterial outer membrane biogenesis; LPS lipid A biosynthesis. Functionally, condensation of UDP-2,3-diacylglucosamine and 2,3-diacylglucosamine-1-phosphate to form lipid A disaccharide, a precursor of lipid A, a phosphorylated glycolipid that anchors the lipopolysaccharide to the outer membrane of the cell. The polypeptide is Lipid-A-disaccharide synthase (Ruegeria pomeroyi (strain ATCC 700808 / DSM 15171 / DSS-3) (Silicibacter pomeroyi)).